A 266-amino-acid chain; its full sequence is Glucosamine-6-phosphate deaminase (266 aa).

Catalysis depends on D72, which acts as the Proton acceptor; for enolization step. D141 serves as the catalytic For ring-opening step. The active-site Proton acceptor; for ring-opening step is the H143. E148 functions as the For ring-opening step in the catalytic mechanism.

It belongs to the glucosamine/galactosamine-6-phosphate isomerase family. NagB subfamily. As to quaternary structure, homohexamer.

It catalyses the reaction alpha-D-glucosamine 6-phosphate + H2O = beta-D-fructose 6-phosphate + NH4(+). It participates in amino-sugar metabolism; N-acetylneuraminate degradation; D-fructose 6-phosphate from N-acetylneuraminate: step 5/5. Its activity is regulated as follows. Allosterically activated by N-acetylglucosamine 6-phosphate (GlcNAc6P). In terms of biological role, catalyzes the reversible isomerization-deamination of glucosamine 6-phosphate (GlcN6P) to form fructose 6-phosphate (Fru6P) and ammonium ion. This Yersinia pseudotuberculosis serotype O:1b (strain IP 31758) protein is Glucosamine-6-phosphate deaminase.